The primary structure comprises 135 residues: Global transcriptional regulator Spx 2 (135 aa).

Residue Cys10 is part of the active site.

It belongs to the ArsC family. Spx subfamily. In terms of assembly, interacts with the C-terminal domain of the alpha subunit of the RNAP.

The protein localises to the cytoplasm. In terms of biological role, global transcriptional regulator that plays a key role in stress response and exerts either positive or negative regulation of genes. Acts by interacting with the C-terminal domain of the alpha subunit of the RNA polymerase (RNAP). This interaction can enhance binding of RNAP to the promoter region of target genes and stimulate their transcription, or block interaction of RNAP with activator. This is Global transcriptional regulator Spx 2 from Oceanobacillus iheyensis (strain DSM 14371 / CIP 107618 / JCM 11309 / KCTC 3954 / HTE831).